Here is a 174-residue protein sequence, read N- to C-terminus: uncharacterized protein (174 aa).

The region spanning 42-174 is the N-acetyltransferase domain; that stretch reads SSNKNINLYE…GVKGMFWYPR (133 aa).

This sequence belongs to the acetyltransferase family. Ycf52 subfamily.

Its subcellular location is the plastid. It localises to the chloroplast. This is an uncharacterized protein from Pyropia yezoensis (Susabi-nori).